The sequence spans 172 residues: RNA silencing suppressor p19 (172 aa).

Basic and acidic residues-rich tracts occupy residues 1–14 and 150–172; these read MERAIQGSDVREQA and SEREGNVSRRRPEGTEAFKEESE. Disordered stretches follow at residues 1–34 and 145–172; these read MERAIQGSDVREQADSECWDGGGGGTTSPFKLPD and LQPTPSEREGNVSRRRPEGTEAFKEESE.

It belongs to the tombusvirus protein p19 family. In terms of assembly, homodimer.

In terms of biological role, viral suppressor of RNA silencing which binds specifically to silencing RNAs (siRNAs). Acts as a molecular caliper to specifically select siRNAs based on the length of the duplex region of the RNA. This chain is RNA silencing suppressor p19, found in Cymbidium ringspot virus (CymRSV).